Reading from the N-terminus, the 362-residue chain is 3-dehydroquinate synthase (362 aa).

NAD(+) is bound by residues 70 to 75 (DGEKYK), 104 to 108 (GVIGD), 128 to 129 (TT), K141, K150, and 168 to 171 (TLNT). Positions 183, 246, and 263 each coordinate Zn(2+).

This sequence belongs to the sugar phosphate cyclases superfamily. Dehydroquinate synthase family. The cofactor is NAD(+). Co(2+) serves as cofactor. Zn(2+) is required as a cofactor.

The protein localises to the cytoplasm. It carries out the reaction 7-phospho-2-dehydro-3-deoxy-D-arabino-heptonate = 3-dehydroquinate + phosphate. Its pathway is metabolic intermediate biosynthesis; chorismate biosynthesis; chorismate from D-erythrose 4-phosphate and phosphoenolpyruvate: step 2/7. Catalyzes the conversion of 3-deoxy-D-arabino-heptulosonate 7-phosphate (DAHP) to dehydroquinate (DHQ). This is 3-dehydroquinate synthase from Haemophilus influenzae (strain ATCC 51907 / DSM 11121 / KW20 / Rd).